The following is a 240-amino-acid chain: Eukaryotic translation initiation factor 4E-2 (240 aa).

A disordered region spans residues 1–29 (MVVMDSPVSGRMADQNIDPNTTTSPSPIE). Over residues 17-26 (IDPNTTTSPS) the composition is skewed to polar residues. EIF4G-binding regions lie at residues 65 to 68 (HCFQ) and 75 to 111 (FDNP…NNIH). MRNA-binding positions include 83 to 88 (NQVIWG), Lys-115, and 133 to 134 (WE). An intrachain disulfide couples Cys-138 to Cys-176. Residues 159–168 (NTLLALVGEQ) are EIF4G-binding. MRNA contacts are provided by residues 183 to 188 (RTRGDR) and 228 to 232 (KTLDR).

The protein belongs to the eukaryotic initiation factor 4E family. In terms of assembly, EIF4F is a multi-subunit complex, the composition of which varies with external and internal environmental conditions. It is composed of at least EIF4A, EIF4E and EIF4G. EIF4E is also known to interact with other partners. In higher plants two isoforms of EIF4F have been identified, named isoform EIF4F and isoform EIF(iso)4F. Isoform EIF4F has subunits p220 and p26, whereas isoform EIF(iso)4F has subunits p82 and p28. In terms of processing, according to the redox status, the Cys-138-Cys-176 disulfide bridge may have a role in regulating protein function by affecting its ability to bind capped mRNA.

It is found in the nucleus. It localises to the cytoplasm. Component of the protein complex eIF4F, which is involved in the recognition of the mRNA cap, ATP-dependent unwinding of 5'-terminal secondary structure and recruitment of mRNA to the ribosome. Recognizes and binds the 7-methylguanosine-containing mRNA cap during an early step in the initiation of protein synthesis and facilitates ribosome binding by inducing the unwinding of the mRNAs secondary structures. This Arabidopsis thaliana (Mouse-ear cress) protein is Eukaryotic translation initiation factor 4E-2.